A 344-amino-acid polypeptide reads, in one-letter code: L-rhamnose-proton symporter (344 aa).

The next 10 membrane-spanning stretches (helical) occupy residues 4–24 (AITM…CFYA), 38–58 (WSVG…ALLL), 68–88 (FSLS…IGNI), 101–121 (MGIG…TPII), 137–157 (TLLG…AGQL), 175–195 (LVLA…MNAA), 214–234 (LPSY…FCFI), 259–279 (VLLS…YAWG), 290–310 (ISWM…GLVL), and 323–343 (VLSL…IGMA).

The protein belongs to the L-rhamnose transporter (TC 2.A.7.6) family.

It localises to the cell inner membrane. The enzyme catalyses L-rhamnopyranose(in) + H(+)(in) = L-rhamnopyranose(out) + H(+)(out). Uptake of L-rhamnose across the cytoplasmic membrane with the concomitant transport of protons into the cell (symport system). In Escherichia coli O1:K1 / APEC, this protein is L-rhamnose-proton symporter.